We begin with the raw amino-acid sequence, 394 residues long: Elongation factor Tu 1 (394 aa).

Residues 10–204 (KPHVNVGTIG…ALDSYIPEPQ (195 aa)) form the tr-type G domain. The segment at 19–26 (GHVDHGKT) is G1. GTP is bound at residue 19–26 (GHVDHGKT). A Mg(2+)-binding site is contributed by Thr-26. The tract at residues 60-64 (GITIS) is G2. The interval 81–84 (DCPG) is G3. Residues 81–85 (DCPGH) and 136–139 (NKCD) contribute to the GTP site. Residues 136 to 139 (NKCD) are G4. The segment at 174 to 176 (SAL) is G5.

Belongs to the TRAFAC class translation factor GTPase superfamily. Classic translation factor GTPase family. EF-Tu/EF-1A subfamily. As to quaternary structure, monomer.

The protein resides in the cytoplasm. It carries out the reaction GTP + H2O = GDP + phosphate + H(+). GTP hydrolase that promotes the GTP-dependent binding of aminoacyl-tRNA to the A-site of ribosomes during protein biosynthesis. This chain is Elongation factor Tu 1, found in Pseudoalteromonas translucida (strain TAC 125).